Reading from the N-terminus, the 100-residue chain is Urease subunit gamma (100 aa).

The protein belongs to the urease gamma subunit family. In terms of assembly, heterotrimer of UreA (gamma), UreB (beta) and UreC (alpha) subunits. Three heterotrimers associate to form the active enzyme.

It is found in the cytoplasm. It carries out the reaction urea + 2 H2O + H(+) = hydrogencarbonate + 2 NH4(+). The protein operates within nitrogen metabolism; urea degradation; CO(2) and NH(3) from urea (urease route): step 1/1. The sequence is that of Urease subunit gamma from Prochlorococcus marinus (strain MIT 9313).